Reading from the N-terminus, the 423-residue chain is Dihydrolipoyllysine-residue succinyltransferase component of 2-oxoglutarate dehydrogenase complex (423 aa).

The region spanning 1 to 76 is the Lipoyl-binding domain; that stretch reads MPEVKVPELA…EVGQAIAVIG (76 aa). Lys-42 is subject to N6-lipoyllysine. Residues 76-185 form a disordered region; it reads GEGSGNASKE…APAKEEKKYN (110 aa). A compositionally biased stretch (polar residues) spans 80-96; it reads GNASKENSNDNTPQQND. Residues 99–115 show a composition bias toward basic and acidic residues; that stretch reads TNNKKEETTNKSADKAE. A compositionally biased stretch (polar residues) spans 116 to 131; sequence VNQTNDDNQQRVNATP. Residues 128–164 form the Peripheral subunit-binding (PSBD) domain; sequence NATPSARRYARENGVNLAEVSPKTNDVVRKEDIDKKQ. The span at 153–164 shows a compositional bias: basic and acidic residues; that stretch reads DVVRKEDIDKKQ. Low complexity predominate over residues 165 to 177; sequence QAPASTQTTQQAP. Residues His-394 and Asp-398 contribute to the active site.

It belongs to the 2-oxoacid dehydrogenase family. Forms a 24-polypeptide structural core with octahedral symmetry. Part of the 2-oxoglutarate dehydrogenase (OGDH) complex composed of E1 (2-oxoglutarate dehydrogenase), E2 (dihydrolipoamide succinyltransferase) and E3 (dihydrolipoamide dehydrogenase); the complex contains multiple copies of the three enzymatic components (E1, E2 and E3). It depends on (R)-lipoate as a cofactor.

The catalysed reaction is N(6)-[(R)-dihydrolipoyl]-L-lysyl-[protein] + succinyl-CoA = N(6)-[(R)-S(8)-succinyldihydrolipoyl]-L-lysyl-[protein] + CoA. It participates in amino-acid degradation; L-lysine degradation via saccharopine pathway; glutaryl-CoA from L-lysine: step 6/6. Its function is as follows. E2 component of the 2-oxoglutarate dehydrogenase (OGDH) complex which catalyzes the second step in the conversion of 2-oxoglutarate to succinyl-CoA and CO(2). This Staphylococcus aureus (strain MRSA252) protein is Dihydrolipoyllysine-residue succinyltransferase component of 2-oxoglutarate dehydrogenase complex (odhB).